The sequence spans 504 residues: Maturase K (504 aa).

It belongs to the intron maturase 2 family. MatK subfamily.

The protein localises to the plastid. Its subcellular location is the chloroplast. In terms of biological role, usually encoded in the trnK tRNA gene intron. Probably assists in splicing its own and other chloroplast group II introns. The chain is Maturase K from Guizotia abyssinica (Niger).